We begin with the raw amino-acid sequence, 361 residues long: UDP-N-acetylglucosamine--N-acetylmuramyl-(pentapeptide) pyrophosphoryl-undecaprenol N-acetylglucosamine transferase (361 aa).

Residues 11 to 13 (TGG), asparagine 124, arginine 164, serine 192, and glutamine 295 each bind UDP-N-acetyl-alpha-D-glucosamine.

This sequence belongs to the glycosyltransferase 28 family. MurG subfamily.

Its subcellular location is the cell membrane. It carries out the reaction di-trans,octa-cis-undecaprenyl diphospho-N-acetyl-alpha-D-muramoyl-L-alanyl-D-glutamyl-meso-2,6-diaminopimeloyl-D-alanyl-D-alanine + UDP-N-acetyl-alpha-D-glucosamine = di-trans,octa-cis-undecaprenyl diphospho-[N-acetyl-alpha-D-glucosaminyl-(1-&gt;4)]-N-acetyl-alpha-D-muramoyl-L-alanyl-D-glutamyl-meso-2,6-diaminopimeloyl-D-alanyl-D-alanine + UDP + H(+). Its pathway is cell wall biogenesis; peptidoglycan biosynthesis. In terms of biological role, cell wall formation. Catalyzes the transfer of a GlcNAc subunit on undecaprenyl-pyrophosphoryl-MurNAc-pentapeptide (lipid intermediate I) to form undecaprenyl-pyrophosphoryl-MurNAc-(pentapeptide)GlcNAc (lipid intermediate II). The sequence is that of UDP-N-acetylglucosamine--N-acetylmuramyl-(pentapeptide) pyrophosphoryl-undecaprenol N-acetylglucosamine transferase from Deinococcus geothermalis (strain DSM 11300 / CIP 105573 / AG-3a).